A 447-amino-acid polypeptide reads, in one-letter code: ATP-dependent 6-phosphofructokinase (447 aa).

Residues G88, 154–155, and 179–182 each bind ATP; these read RG and GDGT. Mg(2+) is bound at residue D180. Substrate-binding positions include 208–210, 253–255, E315, and 368–371; these read TVD, MGR, and YIIR. Residue D210 is the Proton acceptor of the active site.

This sequence belongs to the phosphofructokinase type A (PFKA) family. PPi-dependent PFK group II subfamily. Atypical ATP-dependent clade 'X' sub-subfamily. In terms of assembly, homodimer. Requires Mg(2+) as cofactor.

It localises to the cytoplasm. The enzyme catalyses beta-D-fructose 6-phosphate + ATP = beta-D-fructose 1,6-bisphosphate + ADP + H(+). Its pathway is carbohydrate degradation; glycolysis; D-glyceraldehyde 3-phosphate and glycerone phosphate from D-glucose: step 3/4. Functionally, catalyzes the phosphorylation of D-fructose 6-phosphate to fructose 1,6-bisphosphate by ATP, the first committing step of glycolysis. This chain is ATP-dependent 6-phosphofructokinase, found in Borreliella burgdorferi (strain ATCC 35210 / DSM 4680 / CIP 102532 / B31) (Borrelia burgdorferi).